The primary structure comprises 3511 residues: Unconventional myosin-XV (3511 aa).

Disordered stretches follow at residues 1–44 (MADE…TPKI), 574–690 (KKPI…SLRQ), 712–1030 (FAEP…PNKN), and 1105–1135 (VSSF…PQAC). Over residues 622–634 (SQPQARNNNNSHG) the composition is skewed to polar residues. Over residues 654-672 (PPMPAPSPSPASPLTPPFS) the composition is skewed to pro residues. The span at 769 to 792 (PSLRSLPGQGYHSPLGPLSPQLSL) shows a compositional bias: low complexity. Positions 797–807 (FQPPFPPPPRR) are enriched in pro residues. In terms of domain architecture, Myosin motor spans 1206-1883 (DGVEDMTQLE…LHQLLESMRE (678 aa)). ATP is bound at residue 1299–1306 (GESGSGKT). Residues 1307-1334 (EATKLILRCLAAMNQRRDVMQQIKILEA) adopt a coiled-coil conformation. Positions 1776-1783 (FVRCLKPN) are actin-binding. A neck or regulatory domain region spans residues 1872–2013 (EHLHQLLESM…SSGPRVAVVR (142 aa)). IQ domains are found at residues 1886-1908 (QNRA…HFRS) and 1909-1938 (LRRK…SLLK). The tail stretch occupies residues 2014-3511 (APRLQAEPCV…TLPPSEITLL (1498 aa)). Residues 2049–2195 (MLTVPLKMPL…PTQLEWTAIQ (147 aa)) enclose the MyTH4 1 domain. Disordered regions lie at residues 2330 to 2359 (SHKE…GEST), 2392 to 2425 (YRMK…PIPG), 2460 to 2509 (PLSA…SVAK), 2565 to 2584 (KQPP…GKVF), and 2629 to 2648 (RPCM…PPED). A compositionally biased stretch (polar residues) spans 2337–2351 (NGETEAQRWTSNRQA). The span at 2395-2406 (KGGGQPGGGGGS) shows a compositional bias: gly residues. Residues 2410 to 2420 (DTSRRPPEPKL) are compositionally biased toward basic and acidic residues. A compositionally biased stretch (basic and acidic residues) spans 2573–2584 (PEARRTDGGKVF). Residues 2848 to 2934 (KDSDYVVAVR…PSELVQPAAA (87 aa)) enclose the SH3 domain. A disordered region spans residues 2964-2984 (EVGRRREGPPVRARSADSGED). Basic and acidic residues predominate over residues 2965-2980 (VGRRREGPPVRARSAD). One can recognise a MyTH4 2 domain in the interval 3031–3185 (FTKVPIQESL…PSNMELRAML (155 aa)). The region spanning 3190–3511 (SKRQLFLLPG…TLPPSEITLL (322 aa)) is the FERM domain.

This sequence belongs to the TRAFAC class myosin-kinesin ATPase superfamily. Myosin family. In terms of assembly, interacts with the third PDZ domain of WHRN which is necessary for localization of WHRN to stereocilium tips. Interacts with FASLG. Interacts with EPS8. As to expression, in the developing inner ear, expressed in cochlea and vestibular apparatus. Expression appears to be restricted to cochlear neurosensory cells and upper epithelial layer of macula saccula. Also expressed in macula utriculi and cristae ampullaris of the semicircular canals. In adult cochlear hair cells, highest expression in stereocilia and apical body.

It is found in the cell projection. Its subcellular location is the stereocilium. The protein localises to the cytoplasm. It localises to the cytoskeleton. Myosins are actin-based motor molecules with ATPase activity. Unconventional myosins serve in intracellular movements. Their highly divergent tails are presumed to bind to membranous compartments, which would be moved relative to actin filaments. Required for the arrangement of stereocilia in mature hair bundles. The chain is Unconventional myosin-XV (Myo15a) from Mus musculus (Mouse).